We begin with the raw amino-acid sequence, 499 residues long: T-cell activation inhibitor, mitochondrial (499 aa).

Positions L206 to R233 form a coiled coil.

In terms of tissue distribution, expressed in peripheral blood leukocytes, mainly in T-lymphocytes.

The protein localises to the mitochondrion. Its function is as follows. May regulate T-cell apoptosis. The polypeptide is T-cell activation inhibitor, mitochondrial (TCAIM) (Mus musculus (Mouse)).